The following is an 83-amino-acid chain: Alpha-elapitoxin-Ppr1 (83 aa).

Residues 1-21 form the signal peptide; sequence MKTLLLTLVVVTIVCLDLGYT. Cystine bridges form between cysteine 24–cysteine 45, cysteine 38–cysteine 62, cysteine 64–cysteine 75, and cysteine 76–cysteine 81.

The protein belongs to the three-finger toxin family. Short-chain subfamily. Type I alpha-neurotoxin sub-subfamily. As to expression, expressed by the venom gland.

It localises to the secreted. Its function is as follows. Bird-specific neurotoxin (tested on chicken) that acts as a pseudo-irreversible antagonist at the nicotinic acetylcholine receptor (nAChR) of the skeletal neuromuscular junction. Has no significant effect on the electrically-induced twitches of the rat isolated phrenic nerve-diaphragm preparation. The protein is Alpha-elapitoxin-Ppr1 of Pseudechis porphyriacus (Red-bellied black snake).